Reading from the N-terminus, the 734-residue chain is NAD(P)H-quinone oxidoreductase subunit 5, chloroplastic (734 aa).

The next 16 helical transmembrane spans lie at 9 to 29, 39 to 59, 89 to 109, 125 to 145, 147 to 167, 185 to 205, 224 to 244, 258 to 278, 280 to 300, 327 to 347, 354 to 374, 396 to 416, 425 to 445, 542 to 562, 605 to 625, and 714 to 734; these read WVIPLLPLPVIMSMGFGLFLV, IWAFPSVLLLSIAMVFSVHLS, IDPLTSIMLILITTVGILVLI, FVYISFFNTSMLGLVTSSNLI, IYFFWELVGMCSYLLIGFWFT, GDFGLLLGILGFFWITGSLEF, LLTILCAFLLFLGAVAKSAQF, TPISALIHAATMVAAGIFLIA, LLPLFISLPLIMSFISLIGTL, LGYMMLALGIGSYQAALFHLI, ALLFLGSGSVIHSMEPLVGYS, TCFLWGTLSLCGIPPLACFWS, WLYSPFFGIIASFTAGLTAFY, LFPLLILLLCTLFIGSIGIHF, SLAIFGLFIAYMFYGSAYSFF, and ISSYLFFFLCYVSVFLFFFLS.

The protein belongs to the complex I subunit 5 family. NDH is composed of at least 16 different subunits, 5 of which are encoded in the nucleus.

The protein localises to the plastid. It localises to the chloroplast thylakoid membrane. It carries out the reaction a plastoquinone + NADH + (n+1) H(+)(in) = a plastoquinol + NAD(+) + n H(+)(out). The enzyme catalyses a plastoquinone + NADPH + (n+1) H(+)(in) = a plastoquinol + NADP(+) + n H(+)(out). NDH shuttles electrons from NAD(P)H:plastoquinone, via FMN and iron-sulfur (Fe-S) centers, to quinones in the photosynthetic chain and possibly in a chloroplast respiratory chain. The immediate electron acceptor for the enzyme in this species is believed to be plastoquinone. Couples the redox reaction to proton translocation, and thus conserves the redox energy in a proton gradient. This chain is NAD(P)H-quinone oxidoreductase subunit 5, chloroplastic (ndhF), found in Oryza nivara (Indian wild rice).